The following is a 438-amino-acid chain: MESQQLHQNPHSLHGSAYASVTSKEVPSNQDPLAVSASNLPEFDRDSTKVNSQQETTPGTSAVPENHHHVSPQPASVPPPQNGQYQQHGMMTPNKAMASNWAHYQQPSMMTCSHYQTSPAYYQPDPHYPLPQYIPPLSTSSPDPIDLKNQHSEIPQAKTKVGNNVLPPHTLTSEENFSTWVKFYIRFLKNSNLGDIIPNDQGEIKRQMTYEEHAYIYNTFQAFAPFHLLPTWVKQILEINYADILTVLCKSVSKMQTNNQELKDWIALANLEYDGSTSADTFEITVSTIIQRLKENNINVSDRLACQLILKGLSGDFKYLRNQYRTKTNMKLSQLFAEIQLIYDENKIMNLNKPSQYKQHSEYKNVSRTSPNTTNTKVTTRNYHRTNSSKPRAAKAHNIATSSKFSRVNNDHINESTVSSQYLSDDNELSLRPATERI.

3 stretches are compositionally biased toward polar residues: residues 1 to 11, 19 to 39, and 49 to 60; these read MESQQLHQNPH, ASVTSKEVPSNQDPLAVSASN, and KVNSQQETTPGT. Disordered stretches follow at residues 1–86, 364–397, and 419–438; these read MESQ…GQYQ, KNVSRTSPNTTNTKVTTRNYHRTNSSKPRAAKAH, and SSQYLSDDNELSLRPATERI. Residues 295–397 are RNA-binding; it reads ENNINVSDRL…SSKPRAAKAH (103 aa). The segment covering 369 to 381 has biased composition (low complexity); it reads TSPNTTNTKVTTR.

In terms of assembly, homotrimer.

It localises to the cytoplasm. Functionally, capsid protein (CA) is the structural component of the virus-like particle (VLP), forming the shell that encapsulates the retrotransposons dimeric RNA genome. The particles are assembled from trimer-clustered units and there are holes in the capsid shells that allow for the diffusion of macromolecules. CA also has nucleocapsid-like chaperone activity, promoting primer tRNA(i)-Met annealing to the multipartite primer-binding site (PBS), dimerization of Ty2 RNA and initiation of reverse transcription. This is Transposon Ty2-LR1 Gag polyprotein (TY2A-LR1) from Saccharomyces cerevisiae (strain ATCC 204508 / S288c) (Baker's yeast).